We begin with the raw amino-acid sequence, 202 residues long: Na(+)-translocating NADH-quinone reductase subunit E (202 aa).

Transmembrane regions (helical) follow at residues 11 to 31 (AVFI…FLAV), 39 to 59 (FGLG…NNLI), 81 to 101 (FLKF…LEMA), 114 to 134 (GIFL…AFMV), 144 to 164 (VVFG…LAAV), and 180 to 200 (LGIT…FSGV).

The protein belongs to the NqrDE/RnfAE family. As to quaternary structure, composed of six subunits; NqrA, NqrB, NqrC, NqrD, NqrE and NqrF.

Its subcellular location is the cell inner membrane. The enzyme catalyses a ubiquinone + n Na(+)(in) + NADH + H(+) = a ubiquinol + n Na(+)(out) + NAD(+). NQR complex catalyzes the reduction of ubiquinone-1 to ubiquinol by two successive reactions, coupled with the transport of Na(+) ions from the cytoplasm to the periplasm. NqrA to NqrE are probably involved in the second step, the conversion of ubisemiquinone to ubiquinol. The protein is Na(+)-translocating NADH-quinone reductase subunit E of Idiomarina loihiensis (strain ATCC BAA-735 / DSM 15497 / L2-TR).